A 62-amino-acid polypeptide reads, in one-letter code: MSRKCAISGKGPMVGNNVSHAKNRTRRRFLPNIRTVRVTLEDGTTTKLRISAKELRTLKKHS.

Belongs to the bacterial ribosomal protein bL28 family.

This Aliarcobacter butzleri (strain RM4018) (Arcobacter butzleri) protein is Large ribosomal subunit protein bL28.